Here is a 538-residue protein sequence, read N- to C-terminus: Syncytin-2 (538 aa).

Positions 1 to 15 (MGLLLLLLILTPLLA) are cleaved as a signal peptide. The Extracellular segment spans residues 16 to 478 (AYCHPDFRLL…GWLNWEGTWK (463 aa)). The short motif at 43–46 (CWLC) is the CXXC element. Disulfide bonds link Cys43–Cys46, Cys43–Cys439, and Cys431–Cys438. Residues Asn146, Asn177, Asn220, Asn241, Asn247, Asn312, and Asn332 are each glycosylated (N-linked (GlcNAc...) asparagine). A fusion peptide region spans residues 354 to 374 (LIPLLVGLGIVGSAGTGIAGI). Positions 414 to 430 (LQNRRGLDMLTAAQGGI) match the CKS-17 motif. Residues 431–439 (CLALDEKCC) carry the CX6CC motif. N-linked (GlcNAc...) asparagine glycosylation occurs at Asn443. A helical transmembrane segment spans residues 479 to 499 (WFSWVLPFTGPLVSLLLLLLF). The Cytoplasmic segment spans residues 500 to 538 (GPCLLNLITQFVSSRLQATKLQMKLNKRVHPRNSQESPF).

The protein belongs to the gamma type-C retroviral envelope protein family. HERV class-I FRD env subfamily. As to quaternary structure, the surface and transmembrane proteins form a heterodimer. They are attached by non-covalent interactions or by a labile interchain disulfide bond. Specific enzymatic cleavages in vivo yield the mature SU and TM proteins. In terms of processing, the CXXC motif is highly conserved across a broad range of retroviral envelope proteins. It is thought to participate in the formation of a labile disulfide bond possibly with the CX6CC motif present in the transmembrane protein.

The protein resides in the virion. The protein localises to the cell membrane. Its function is as follows. This endogenous retroviral envelope protein has retained its original fusogenic properties and participates in trophoblast fusion and the formation of a syncytium during placenta morphogenesis. The interaction with MFSD2A is apparently important for this process. Endogenous envelope proteins may have kept, lost or modified their original function during evolution but this one can still make pseudotypes with MLV, HIV-1 or SIV-1 virions and confer infectivity. Retroviral envelope proteins mediate receptor recognition and membrane fusion during early infection. The surface protein mediates receptor recognition, while the transmembrane protein anchors the envelope heterodimer to the viral membrane through one transmembrane domain. The other hydrophobic domain, called fusion peptide, mediates fusion of the viral membrane with the target cell membrane. The sequence is that of Syncytin-2 (ERVFRD-1) from Callithrix jacchus (White-tufted-ear marmoset).